The chain runs to 66 residues: MAKNKGVRIVITLECNECRSNPAIDKRSHGVSRYTTEKNRRNTTERLEIKKFCRYCNKSTTHKEIK.

This sequence belongs to the bacterial ribosomal protein bL33 family.

The polypeptide is Large ribosomal subunit protein bL33 (Prochlorococcus marinus (strain MIT 9303)).